The sequence spans 140 residues: L-fucose mutarotase (140 aa).

The active-site Proton donor is His22. Substrate-binding positions include Asp30, Arg107, and 129 to 131 (YGN).

This sequence belongs to the RbsD / FucU family. FucU mutarotase subfamily. In terms of assembly, homodecamer.

Its subcellular location is the cytoplasm. The enzyme catalyses alpha-L-fucose = beta-L-fucose. The protein operates within carbohydrate metabolism; L-fucose metabolism. Its function is as follows. Involved in the anomeric conversion of L-fucose. The chain is L-fucose mutarotase from Shigella boydii serotype 18 (strain CDC 3083-94 / BS512).